A 146-amino-acid polypeptide reads, in one-letter code: Hemoglobin subunit beta-1 (146 aa).

In terms of domain architecture, Globin spans 2-146 (HWTAEEKALI…VAHALARRYH (145 aa)). Position 92 (His92) interacts with heme b.

It belongs to the globin family. As to quaternary structure, heterotetramer of two alpha chains and two beta chains. In terms of tissue distribution, red blood cells.

In terms of biological role, involved in oxygen transport from the lung to the various peripheral tissues. This Saara hardwickii (Indian spiny-tailed lizard) protein is Hemoglobin subunit beta-1.